Here is a 640-residue protein sequence, read N- to C-terminus: Leucine-rich repeat-containing protein 4C (640 aa).

An N-terminal signal peptide occupies residues 1-44 (MLNKMTLHPQQIMIGPRFNRALFDPLLVVLLALQLLVVAGLVRA). The region spanning 45–76 (QTCPSVCSCSNQFSKVICVRKNLREVPDGIST) is the LRRNT domain. LRR repeat units follow at residues 77–98 (NTRL…SFKH), 101–122 (HLEI…AFNG), 125–146 (NLNT…AFVY), 149–170 (KLKE…AFNR), 173–195 (SLRR…AFEG), 198–219 (NLRY…TPLI), 220–241 (KLDE…SFQG), 244–265 (HLQK…AFDN), and 268–289 (SLVE…LFTP). The LRRCT domain maps to 301-353 (NPWNCNCDILWLSWWIKDMAPSNTACCARCNTPPNLKGRYIGELDQNYFTCYA). An Ig-like C2-type domain is found at 354–442 (PVIVEPPADL…GNTTASATLN (89 aa)). A disulfide bridge links cysteine 375 with cysteine 426. The tract at residues 463-483 (EPSQDEARTTDNNVGPTPVVD) is disordered. The chain crosses the membrane as a helical span at residues 528–548 (IIIGCFVAITLMAAVMLVIFY). Position 631 is a phosphoserine (serine 631).

Interacts with NTNG1 and WHRN. In terms of tissue distribution, highly expressed in the cerebral cortex, including frontal, parietal and occipital lobes. Putamen, amygdala, hippocampus and medulla oblongata show moderate expression. Caudate nucleus and thalamus express small amounts, whereas other brain regions show very weak or no expression.

It is found in the postsynaptic cell membrane. Its function is as follows. May promote neurite outgrowth of developing thalamic neurons. The sequence is that of Leucine-rich repeat-containing protein 4C (LRRC4C) from Homo sapiens (Human).